Reading from the N-terminus, the 1242-residue chain is DNA polymerase catalytic subunit (1242 aa).

3 disordered regions span residues 14-38, 644-665, and 1109-1162; these read GAVA…RPPQ, LQSA…SSSS, and APQG…RKPP. Positions 653–665 are enriched in low complexity; sequence GVSPGSGSNSSSS. Polar residues predominate over residues 1111-1125; sequence QGSSDNGDSVTTGVV. Positions 1145 to 1155 are enriched in basic and acidic residues; that stretch reads ESNRRGGEPAK.

It belongs to the DNA polymerase type-B family. In terms of assembly, forms a complex with the ssDNA-binding protein UL57, the DNA polymerase processivity factor UL44, and the alkaline exonuclease UL98. Interacts with the putative helicase-primase complex composed of UL70, UL102 and UL105 proteins; these interactions may coordinate leading and lagging strand DNA synthesis at the replication fork.

The protein localises to the host nucleus. The enzyme catalyses DNA(n) + a 2'-deoxyribonucleoside 5'-triphosphate = DNA(n+1) + diphosphate. Its function is as follows. Replicates viral genomic DNA in the late phase of lytic infection, producing long concatemeric DNA. The replication complex is composed of six viral proteins: the DNA polymerase, processivity factor, primase, primase-associated factor, helicase, and ssDNA-binding protein. The polypeptide is DNA polymerase catalytic subunit (UL54) (Homo sapiens (Human)).